The following is a 1085-amino-acid chain: Aminopeptidase N (1085 aa).

A signal peptide (required for ER targeting and membrane association; not cleaved) is located at residues Met1–Cys30. A sufficient for targeting to the food vacuole region spans residues Met1–Tyr200. A disordered region spans residues Glu108–Gly130. Positions Asn112 to Asn123 are enriched in low complexity. A peptide is bound by residues Glu319, Gly460, Ala461, and Glu463. His496 contributes to the Zn(2+) binding site. Glu497 (proton acceptor) is an active-site residue. Zn(2+) contacts are provided by His500 and Glu519.

Belongs to the peptidase M1 family. As to quaternary structure, heterodimer of the p68 form and the p35 form which are derived from the p120 precursor. Requires Zn(2+) as cofactor. The full length protein appears to be cleaved into a 120 kDa precursor. This precursor is then proteolytically cleaved at the N-terminus generating a 96 kDa form which is further processed at the C-terminus into 68 kDa and 35 kDa forms that remain associated.

It is found in the parasitophorous vacuole membrane. The protein localises to the nucleus. Its subcellular location is the cytoplasm. It localises to the vacuole lumen. Its activity is regulated as follows. Inhibited by 1,10-phenanthroline, EDTA and bestatin. Inhibited by (Benzyl)Tyr-Ala (BTA). Activity is not affected by phosphoramidin, PMSF, leupeptin, iodoacetamide or pepstatin. Displays aminopeptidase activity with a broad substrate specificity. Preferentially, cleaves after Leu and Met, but also cleaves after Ala and Arg. Low activity towards Lys, Phe, Tyr, Trp, Gln, Ser and Gly and negligible activity towards Glu, Asp, Pro, Ile, Thr, Val, His and Asn. Has dipeptidase activity. Plays a role in the terminal stages of host hemoglobin digestion by cleaving the N-terminal residue of small hemoglobin-derived oligopeptides. In Plasmodium falciparum (isolate 3D7), this protein is Aminopeptidase N.